The sequence spans 311 residues: Aspartate carbamoyltransferase catalytic subunit (311 aa).

Positions 55 and 56 each coordinate carbamoyl phosphate. Lysine 85 contacts L-aspartate. 3 residues coordinate carbamoyl phosphate: arginine 106, histidine 135, and glutamine 138. L-aspartate contacts are provided by arginine 168 and arginine 230. Carbamoyl phosphate contacts are provided by leucine 268 and proline 269.

This sequence belongs to the aspartate/ornithine carbamoyltransferase superfamily. ATCase family. As to quaternary structure, heterododecamer (2C3:3R2) of six catalytic PyrB chains organized as two trimers (C3), and six regulatory PyrI chains organized as three dimers (R2).

It catalyses the reaction carbamoyl phosphate + L-aspartate = N-carbamoyl-L-aspartate + phosphate + H(+). The protein operates within pyrimidine metabolism; UMP biosynthesis via de novo pathway; (S)-dihydroorotate from bicarbonate: step 2/3. Its function is as follows. Catalyzes the condensation of carbamoyl phosphate and aspartate to form carbamoyl aspartate and inorganic phosphate, the committed step in the de novo pyrimidine nucleotide biosynthesis pathway. This chain is Aspartate carbamoyltransferase catalytic subunit, found in Pectobacterium atrosepticum (strain SCRI 1043 / ATCC BAA-672) (Erwinia carotovora subsp. atroseptica).